The primary structure comprises 336 residues: WAT1-related protein At2g37450 (336 aa).

The next 9 membrane-spanning stretches (helical) occupy residues 7 to 27 (ALPFILMVLLQIGYAGMDILT), 45 to 65 (HGVATVVMAPFAFYFDNPVIA), 79 to 99 (TFAIALYNTLPAVTFILALIF), 115 to 135 (VVGTVTTVGGIMVMTLVKGPA), 160 to 180 (GAVLVTIGCFSYACFMILQAI), 189 to 209 (LSLATWICLIGTIEGVVVALV), 227 to 247 (LTITYSGIVCSALGYYIGGVV), 255 to 275 (FVTAFKPLCMIVVAIMSSIIF), and 279 to 299 (MYLGRALGATVICVGLYLVIW). EamA domains are found at residues 63-126 (VIAQ…GGIM) and 169-298 (FSYA…YLVI).

It belongs to the drug/metabolite transporter (DMT) superfamily. Plant drug/metabolite exporter (P-DME) (TC 2.A.7.4) family.

It localises to the membrane. The polypeptide is WAT1-related protein At2g37450 (Arabidopsis thaliana (Mouse-ear cress)).